Consider the following 303-residue polypeptide: Glyceraldehyde-3-phosphate dehydrogenase (303 aa).

Residues 6 to 7, Asp28, Arg72, and Thr114 contribute to the NAD(+) site; that span reads RI. Residues 143-145, Thr174, 203-204, and Arg226 contribute to the D-glyceraldehyde 3-phosphate site; these read SCT and TG. Cys144 acts as the Nucleophile in catalysis.

This sequence belongs to the glyceraldehyde-3-phosphate dehydrogenase family. As to quaternary structure, homotetramer.

It localises to the cytoplasm. The enzyme catalyses D-glyceraldehyde 3-phosphate + phosphate + NAD(+) = (2R)-3-phospho-glyceroyl phosphate + NADH + H(+). It participates in carbohydrate degradation; glycolysis; pyruvate from D-glyceraldehyde 3-phosphate: step 1/5. Catalyzes the oxidative phosphorylation of glyceraldehyde 3-phosphate (G3P) to 1,3-bisphosphoglycerate (BPG) using the cofactor NAD. The first reaction step involves the formation of a hemiacetal intermediate between G3P and a cysteine residue, and this hemiacetal intermediate is then oxidized to a thioester, with concomitant reduction of NAD to NADH. The reduced NADH is then exchanged with the second NAD, and the thioester is attacked by a nucleophilic inorganic phosphate to produce BPG. The sequence is that of Glyceraldehyde-3-phosphate dehydrogenase (gap) from Klebsiella pneumoniae.